A 44-amino-acid chain; its full sequence is MENSAFFYGVFLWCLLISVTGYSIYIGFGPPSKELRDPFEEHED.

The helical transmembrane segment at 6–26 (FFYGVFLWCLLISVTGYSIYI) threads the bilayer.

The protein belongs to the PsbN family.

It is found in the plastid. The protein localises to the chloroplast thylakoid membrane. May play a role in photosystem I and II biogenesis. The chain is Protein PsbN from Ostreococcus tauri.